The primary structure comprises 476 residues: Proline--tRNA ligase 2 (476 aa).

This sequence belongs to the class-II aminoacyl-tRNA synthetase family. ProS type 3 subfamily. In terms of assembly, homodimer.

Its subcellular location is the cytoplasm. It carries out the reaction tRNA(Pro) + L-proline + ATP = L-prolyl-tRNA(Pro) + AMP + diphosphate. Catalyzes the attachment of proline to tRNA(Pro) in a two-step reaction: proline is first activated by ATP to form Pro-AMP and then transferred to the acceptor end of tRNA(Pro). This is Proline--tRNA ligase 2 from Bacillus thuringiensis subsp. konkukian (strain 97-27).